Reading from the N-terminus, the 130-residue chain is ATP synthase epsilon chain (130 aa).

Belongs to the ATPase epsilon chain family. In terms of assembly, F-type ATPases have 2 components, CF(1) - the catalytic core - and CF(0) - the membrane proton channel. CF(1) has five subunits: alpha(3), beta(3), gamma(1), delta(1), epsilon(1). CF(0) has three main subunits: a, b and c.

It is found in the cell inner membrane. Functionally, produces ATP from ADP in the presence of a proton gradient across the membrane. The chain is ATP synthase epsilon chain from Pelagibacter ubique (strain HTCC1062).